A 514-amino-acid polypeptide reads, in one-letter code: JmjC domain-containing histone demethylation protein 1 (514 aa).

The PHD-type zinc finger occupies 4-62; sequence IDTCPICVESPLEDSTTFNNIAWLQCDICNQWFHASCLKIPKIEVNNLHSYHCEGCSKS. One can recognise a JmjC domain in the interval 220 to 384; it reads SDVDSFGKSF…MHLRIYEIEK (165 aa). T267 provides a ligand contact to substrate. Residues H270 and D272 each coordinate Fe cation. K287 contributes to the substrate binding site. Residue H352 coordinates Fe cation. The segment covering 432–454 has biased composition (basic and acidic residues); that stretch reads KSEAHSRGEVHTKTETHAVKDEP. The tract at residues 432–456 is disordered; it reads KSEAHSRGEVHTKTETHAVKDEPQP.

The protein belongs to the JHDM1 histone demethylase family. Fe(2+) serves as cofactor.

It localises to the nucleus. It catalyses the reaction N(6),N(6)-dimethyl-L-lysyl(36)-[histone H3] + 2 2-oxoglutarate + 2 O2 = L-lysyl(36)-[histone H3] + 2 formaldehyde + 2 succinate + 2 CO2. Functionally, histone demethylase that specifically demethylates 'Lys-36' of histone H3, thereby playing a central role in histone code. This chain is JmjC domain-containing histone demethylation protein 1 (JHD1), found in Debaryomyces hansenii (strain ATCC 36239 / CBS 767 / BCRC 21394 / JCM 1990 / NBRC 0083 / IGC 2968) (Yeast).